The chain runs to 346 residues: Inositol 2-dehydrogenase (346 aa).

This sequence belongs to the Gfo/Idh/MocA family. As to quaternary structure, homotetramer.

The catalysed reaction is myo-inositol + NAD(+) = scyllo-inosose + NADH + H(+). Involved in the oxidation of myo-inositol (MI) to 2-keto-myo-inositol (2KMI or 2-inosose). This Rhodococcus erythropolis (strain PR4 / NBRC 100887) protein is Inositol 2-dehydrogenase.